Here is a 1357-residue protein sequence, read N- to C-terminus: Regulator of V-ATPase in vacuolar membrane protein 1 (1357 aa).

8 WD repeats span residues 98-134 (HDDTPVNCLRWSSDNELAIGSDFLSFWKIKDNFGVYQ), 142-182 (KQPK…GEQA), 190-239 (PHPK…KNHT), 384-423 (GHNKSVQKLVRSSDGEALLTTSRFSENGVWYPQKLNHGVS), 431-470 (QTESPIKFAVVHELGKQVICLLENGALQAWECPTNRKEDS), 595-636 (INTG…LEYE), 638-679 (TFHN…YTNN), and 898-939 (QKSI…RIAY). Residues 1243-1357 (GSPSASDIES…ITKNLLDDFV (115 aa)) are disordered. Residues serine 1244 and serine 1248 each carry the phosphoserine modification. Positions 1272–1288 (STSSNSLAQSSSSAPRS) are enriched in low complexity. The span at 1320–1332 (SENRKDKLSKDIL) shows a compositional bias: basic and acidic residues.

In terms of assembly, component of the RAVE complex composed of RAV1, RAV2 and CBF3D/SKP1. Within the complex, it interacts directly with RAV2 and CBF3D. Interacts with the V-ATPase V1 subunits VMA1, VMA2 and VMA8.

Its subcellular location is the endomembrane system. In terms of biological role, component of the RAVE complex, which is required for stable assembly of the vacuolar ATPase complex V-ATPase under many conditions. Required for transport between the early endosome and the late endosome/prevacuolar compartment (PVC), suggesting that assembly of vacuolar ATPase at the early endosome is required for transport from the early endosome to the PVC. The sequence is that of Regulator of V-ATPase in vacuolar membrane protein 1 (RAV1) from Saccharomyces cerevisiae (strain ATCC 204508 / S288c) (Baker's yeast).